A 144-amino-acid chain; its full sequence is MATARRVARVAELIKREVSQILLSEIKDDRVGAGMVSIVDVEVSNDLQNARIFVSIYGDETAQHQAMEGLAAATPFVRREIGQRLSLRRVPTVVFLQDRSLERGSRVLALLNQLRPTFEAKAQTGVEEPLENTAEGEENPSGGE.

Positions 121–144 are disordered; sequence KAQTGVEEPLENTAEGEENPSGGE. The span at 128–138 shows a compositional bias: acidic residues; it reads EPLENTAEGEE.

This sequence belongs to the RbfA family. In terms of assembly, monomer. Binds 30S ribosomal subunits, but not 50S ribosomal subunits or 70S ribosomes.

The protein localises to the cytoplasm. In terms of biological role, one of several proteins that assist in the late maturation steps of the functional core of the 30S ribosomal subunit. Associates with free 30S ribosomal subunits (but not with 30S subunits that are part of 70S ribosomes or polysomes). Required for efficient processing of 16S rRNA. May interact with the 5'-terminal helix region of 16S rRNA. The polypeptide is Ribosome-binding factor A (Synechococcus sp. (strain JA-2-3B'a(2-13)) (Cyanobacteria bacterium Yellowstone B-Prime)).